Consider the following 155-residue polypeptide: Probable calcium-binding protein CML44 (155 aa).

EF-hand domains follow at residues 6–41 (ITTNDLRRMFKTLDKNQDGLVTLDELLWILDKLGWA), 85–120 (DNDEAIARAFNVFDVNGDGYISAEELRDVLERLGFE), and 130–155 (RMIRVHDKNLDGFVDFEEFKNMILHV). Ca(2+)-binding residues include Asp-19, Asn-21, Asp-23, Glu-30, Asp-98, Asn-100, Asp-102, Tyr-104, and Glu-109.

In terms of biological role, potential calcium sensor. In Arabidopsis thaliana (Mouse-ear cress), this protein is Probable calcium-binding protein CML44 (CML44).